Here is a 363-residue protein sequence, read N- to C-terminus: 3-isopropylmalate dehydrogenase (363 aa).

78–91 (GPKWEHLPPAEQPE) serves as a coordination point for NAD(+). Substrate contacts are provided by R99, R109, R138, and D227. Mg(2+) is bound by residues D227, D251, and D255. An NAD(+)-binding site is contributed by 285-297 (GSAPDIAGKNIAN).

The protein belongs to the isocitrate and isopropylmalate dehydrogenases family. LeuB type 1 subfamily. Homodimer. Mg(2+) serves as cofactor. It depends on Mn(2+) as a cofactor.

Its subcellular location is the cytoplasm. It catalyses the reaction (2R,3S)-3-isopropylmalate + NAD(+) = 4-methyl-2-oxopentanoate + CO2 + NADH. Its pathway is amino-acid biosynthesis; L-leucine biosynthesis; L-leucine from 3-methyl-2-oxobutanoate: step 3/4. In terms of biological role, catalyzes the oxidation of 3-carboxy-2-hydroxy-4-methylpentanoate (3-isopropylmalate) to 3-carboxy-4-methyl-2-oxopentanoate. The product decarboxylates to 4-methyl-2 oxopentanoate. In Yersinia pestis, this protein is 3-isopropylmalate dehydrogenase.